A 111-amino-acid polypeptide reads, in one-letter code: Cyclin-dependent protein kinase inhibitor SMR2 (111 aa).

Residues 1 to 66 (MSKLLETLEE…PPPRKRPREI (66 aa)) are disordered. The span at 10 to 35 (EEKTVEQKPRSQEEEDHQDSSKKEEL) shows a compositional bias: basic and acidic residues.

Interacts with CYCD2-1. Interacts with CDKB1-1. Expressed at low levels in roots and stems. Expressed in the root vascular tissue.

The protein localises to the nucleus. Its function is as follows. Cyclin-dependent protein kinase (CDK) inhibitor that restricts cell proliferation and cooperates with SIM and SMR1 to promote endoreplication during leaf development. The polypeptide is Cyclin-dependent protein kinase inhibitor SMR2 (Arabidopsis thaliana (Mouse-ear cress)).